Consider the following 315-residue polypeptide: Deoxyhypusine hydroxylase (315 aa).

HEAT-like PBS-type repeat units follow at residues 23–52 (IAKRFRSLFTLRNLNGPLCIDAMASALNDK), 56–82 (LRHEIAYCLGQMEDEYALKVLIDLVKN), 89–115 (VRHEAAEALGAIGSESAHKTLKEYSND), 179–205 (NRYRALFSLRDIGDEQSVLALCDGLKD), 211–237 (LRHEVAFVLGQLQHRVAIDPLTTCVLD), and 244–270 (VRHEAAEALGAIASTETIPLLEKLLQD). Positions 58, 91, and 92 each coordinate Fe cation. His-213, His-246, and Glu-247 together coordinate Fe cation.

This sequence belongs to the deoxyhypusine hydroxylase family. Fe(2+) is required as a cofactor.

It catalyses the reaction [eIF5A protein]-deoxyhypusine + AH2 + O2 = [eIF5A protein]-hypusine + A + H2O. Its pathway is protein modification; eIF5A hypusination. Functionally, catalyzes the hydroxylation of the N(6)-(4-aminobutyl)-L-lysine intermediate produced by deoxyhypusine synthase/DHPS on a critical lysine of the eukaryotic translation initiation factor 5A/eIF-5A. This is the second step of the post-translational modification of that lysine into an unusual amino acid residue named hypusine. Hypusination is unique to mature eIF-5A factor and is essential for its function. This chain is Deoxyhypusine hydroxylase (dohh-1), found in Dictyostelium discoideum (Social amoeba).